The following is a 406-amino-acid chain: MIVLVVNSGSSSIKYQLLDMDNEKVLCKGLAERIGIPGSRIVHKKDGEKFVIEHPMANHDEALQLVLQTLKDEKMGAIKDFKEIDAVGHRVVHGGEKFSGSVLIDDEVINAIEEFSYLAPLHNPPNLMGIKAIMKLLPGVPNVAVFDTAFHAKMPKKAYLYAIPYEYYEKYKIRRYGFHGTSHRYVSRRTAEILGLDYNKSKIITVHLGNGASIAAVMNGKSVDTSMGFTPLEGLVMGTRSGDLDPSIVTFLIEKEGLSPEEVYTILNKKSGVLGLTSNFSSDMRDIEDKALENDPLCRLVLDIYEYRIAKYIGAYVAAMNGVDAISFTAGVGENSPITREEICENYLSYLGIKIDKEKNNVKGEERIISTPDSKVKVLIVPTNEELMIARDTKEIIEKGIKKLEY.

A Mg(2+)-binding site is contributed by Asn-7. Residue Lys-14 coordinates ATP. Residue Arg-90 participates in substrate binding. Asp-147 functions as the Proton donor/acceptor in the catalytic mechanism. Residues 207-211 (HLGNG), 283-285 (DMR), and 331-335 (GVGEN) each bind ATP. Glu-385 provides a ligand contact to Mg(2+).

Belongs to the acetokinase family. Homodimer. The cofactor is Mg(2+). It depends on Mn(2+) as a cofactor.

Its subcellular location is the cytoplasm. It catalyses the reaction acetate + ATP = acetyl phosphate + ADP. It participates in metabolic intermediate biosynthesis; acetyl-CoA biosynthesis; acetyl-CoA from acetate: step 1/2. Catalyzes the formation of acetyl phosphate from acetate and ATP. Can also catalyze the reverse reaction. The sequence is that of Acetate kinase from Thermosipho africanus (strain TCF52B).